The primary structure comprises 248 residues: uncharacterized protein (248 aa).

Glutamate 8 to leucine 32 contributes to the NADP(+) binding site. Residue serine 134 coordinates substrate. Tyrosine 147 (proton acceptor) is an active-site residue.

The protein belongs to the short-chain dehydrogenases/reductases (SDR) family.

This is an uncharacterized protein from Sinorhizobium fredii (strain NBRC 101917 / NGR234).